The sequence spans 166 residues: FMN reductase (NADH) RutF (166 aa).

Belongs to the non-flavoprotein flavin reductase family. RutF subfamily.

The enzyme catalyses FMNH2 + NAD(+) = FMN + NADH + 2 H(+). In terms of biological role, catalyzes the reduction of FMN to FMNH2 which is used to reduce pyrimidine by RutA via the Rut pathway. The protein is FMN reductase (NADH) RutF of Cronobacter sakazakii (strain ATCC BAA-894) (Enterobacter sakazakii).